A 290-amino-acid chain; its full sequence is 33 kDa chaperonin (290 aa).

2 disulfide bridges follow: Cys235–Cys237 and Cys268–Cys271.

It belongs to the HSP33 family. Post-translationally, under oxidizing conditions two disulfide bonds are formed involving the reactive cysteines. Under reducing conditions zinc is bound to the reactive cysteines and the protein is inactive.

The protein localises to the cytoplasm. Its function is as follows. Redox regulated molecular chaperone. Protects both thermally unfolding and oxidatively damaged proteins from irreversible aggregation. Plays an important role in the bacterial defense system toward oxidative stress. This is 33 kDa chaperonin from Streptococcus pyogenes serotype M2 (strain MGAS10270).